The following is a 317-amino-acid chain: Uridylate kinase (317 aa).

An ATP-binding site is contributed by 9–12 (KISG). Gly49 lines the UMP pocket. The ATP site is built by Gly50 and Arg54. UMP is bound by residues Asp69 and 130–137 (TGRPYFTT). Residues Asn158, Tyr164, and Asp167 each coordinate ATP.

Belongs to the UMP kinase family. Homohexamer.

The protein localises to the cytoplasm. The catalysed reaction is UMP + ATP = UDP + ADP. It participates in pyrimidine metabolism; CTP biosynthesis via de novo pathway; UDP from UMP (UMPK route): step 1/1. Inhibited by UTP. In terms of biological role, catalyzes the reversible phosphorylation of UMP to UDP. This chain is Uridylate kinase, found in Malacoplasma penetrans (strain HF-2) (Mycoplasma penetrans).